We begin with the raw amino-acid sequence, 332 residues long: MKLKLNWESALLALLIAEILLFGALNPRMLDINMLLFSTSDFICIGIVALPLTLVIISGGIDISLGSTIGLCAIALGVMTQAGWPLWLAVSLTLLLGLLCGLFNAALIHYTGINPLVITLGTLYLYGGGALLLSGMAGATGYEGIGGFPDSFTAFANLTLGGLPLPLVLFAIITFFFWLLAHRGRFGRHLFLLGQNPRAARYAALSVNGIPYVLYGLVGVASAVAALVMVSYFGSARSDLGRDLLMPALTAAVLGGANIYGGSGSILGTALAALLVGYLQQGLQMVGIPNQVSSALSGALLVVVVMGRSLSLHREWVRATWRRLFSHKTIGA.

Transmembrane regions (helical) follow at residues 5–25, 43–63, 83–103, 116–136, 160–180, 210–230, and 259–279; these read LNWESALLALLIAEILLFGAL, ICIGIVALPLTLVIISGGIDI, GWPLWLAVSLTLLLGLLCGLF, LVITLGTLYLYGGGALLLSGM, LGGLPLPLVLFAIITFFFWLL, IPYVLYGLVGVASAVAALVMV, and IYGGSGSILGTALAALLVGYL.

Belongs to the binding-protein-dependent transport system permease family. AraH/RbsC subfamily. In terms of assembly, the complex is composed of two ATP-binding proteins (LsrA), two transmembrane proteins (LsrC and LsrD) and a solute-binding protein (LsrB).

Its subcellular location is the cell inner membrane. Functionally, part of the ABC transporter complex LsrABCD involved in autoinducer 2 (AI-2) import. Probably responsible for the translocation of the substrate across the membrane. The sequence is that of Autoinducer 2 import system permease protein LsrD (lsrD) from Klebsiella pneumoniae subsp. pneumoniae (strain ATCC 700721 / MGH 78578).